A 317-amino-acid chain; its full sequence is L-lactate dehydrogenase 1 (317 aa).

Residues Val-17, Asp-38, Lys-43, Tyr-69, and 83-84 (GA) contribute to the NAD(+) site. Substrate-binding residues include Gln-86 and Arg-92. NAD(+) contacts are provided by residues Ser-105, 122–124 (ATN), and Ser-147. Position 124 to 127 (124 to 127 (NPVD)) interacts with substrate. 152–155 (DSAR) is a substrate binding site. The active-site Proton acceptor is the His-179. At Tyr-223 the chain carries Phosphotyrosine. Thr-232 provides a ligand contact to substrate.

The protein belongs to the LDH/MDH superfamily. LDH family. In terms of assembly, homotetramer.

The protein resides in the cytoplasm. The catalysed reaction is (S)-lactate + NAD(+) = pyruvate + NADH + H(+). It participates in fermentation; pyruvate fermentation to lactate; (S)-lactate from pyruvate: step 1/1. Catalyzes the conversion of lactate to pyruvate (Potential). Appears to be the primary factor that allows S.aureus growth during nitrosative stress in both aerobically and anaerobically cultured cells. This chain is L-lactate dehydrogenase 1, found in Staphylococcus aureus (strain JH1).